A 582-amino-acid chain; its full sequence is ATP-dependent lipid A-core flippase (582 aa).

5 consecutive transmembrane segments (helical) span residues leucine 16 to leucine 36, valine 63 to tyrosine 83, isoleucine 153 to valine 173, proline 253 to proline 273, and valine 275 to methionine 295. In terms of domain architecture, ABC transmembrane type-1 spans isoleucine 28 to arginine 310. Residues valine 342–methionine 578 form the ABC transporter domain. Glycine 376–serine 383 is a binding site for ATP.

Belongs to the ABC transporter superfamily. Lipid exporter (TC 3.A.1.106) family. In terms of assembly, homodimer.

It localises to the cell inner membrane. It carries out the reaction ATP + H2O + lipid A-core oligosaccharideSide 1 = ADP + phosphate + lipid A-core oligosaccharideSide 2.. In terms of biological role, involved in lipopolysaccharide (LPS) biosynthesis. Translocates lipid A-core from the inner to the outer leaflet of the inner membrane. Transmembrane domains (TMD) form a pore in the inner membrane and the ATP-binding domain (NBD) is responsible for energy generation. The protein is ATP-dependent lipid A-core flippase of Shigella flexneri.